The following is a 185-amino-acid chain: Nuclear transcription factor Y subunit B-3 (185 aa).

The span at 1–36 (MADGPGSPGGGGGSHESGSPRGGGGGGGGGGGGGGV) shows a compositional bias: gly residues. The interval 1-39 (MADGPGSPGGGGGSHESGSPRGGGGGGGGGGGGGGVREQ) is disordered. A DNA-binding region spans residues 43–49 (LPIANIS). Residues 70 to 81 (VQECVSEFISFI) are subunit association domain (SAD). The interval 145–164 (KDVLGSHGGSSSSAQGMGQQ) is disordered. Over residues 153–164 (GSSSSAQGMGQQ) the composition is skewed to low complexity.

It belongs to the NFYB/HAP3 subunit family. In terms of assembly, heterotrimeric transcription factor composed of three components, NF-YA, NF-YB and NF-YC. NF-YB and NF-YC must interact and dimerize for NF-YA association and DNA binding. In terms of tissue distribution, ubiquitous.

The protein resides in the nucleus. Its function is as follows. Component of the NF-Y/HAP transcription factor complex. The NF-Y complex stimulates the transcription of various genes by recognizing and binding to a CCAAT motif in promoters. May regulate the expression of photosynthetic genes, and may be involved in chloroplast and amyloplast development. This chain is Nuclear transcription factor Y subunit B-3 (NFYB3), found in Oryza sativa subsp. japonica (Rice).